We begin with the raw amino-acid sequence, 427 residues long: Serine hydroxymethyltransferase (427 aa).

(6S)-5,6,7,8-tetrahydrofolate is bound by residues leucine 122 and 126 to 128 (GHL). N6-(pyridoxal phosphate)lysine is present on lysine 231.

Belongs to the SHMT family. As to quaternary structure, homodimer. The cofactor is pyridoxal 5'-phosphate.

It is found in the cytoplasm. It carries out the reaction (6R)-5,10-methylene-5,6,7,8-tetrahydrofolate + glycine + H2O = (6S)-5,6,7,8-tetrahydrofolate + L-serine. Its pathway is one-carbon metabolism; tetrahydrofolate interconversion. It participates in amino-acid biosynthesis; glycine biosynthesis; glycine from L-serine: step 1/1. Functionally, catalyzes the reversible interconversion of serine and glycine with tetrahydrofolate (THF) serving as the one-carbon carrier. This reaction serves as the major source of one-carbon groups required for the biosynthesis of purines, thymidylate, methionine, and other important biomolecules. Also exhibits THF-independent aldolase activity toward beta-hydroxyamino acids, producing glycine and aldehydes, via a retro-aldol mechanism. The chain is Serine hydroxymethyltransferase from Acidobacterium capsulatum (strain ATCC 51196 / DSM 11244 / BCRC 80197 / JCM 7670 / NBRC 15755 / NCIMB 13165 / 161).